The following is a 569-amino-acid chain: Aspartokinase 1, chloroplastic (569 aa).

A chloroplast-targeting transit peptide spans 1 to 90 (MAATRVRCCH…VDEKGITCVM (90 aa)). Residues Lys-91, Gly-94, and Ser-123 each contribute to the ATP site. Glu-207 provides a ligand contact to substrate. 2 ACT domains span residues 405 to 483 (IAST…AIIS) and 484 to 560 (LIGN…GNGS). The L-lysine site is built by Gln-413 and Gly-415. Ser-430 contributes to the S-adenosyl-L-methionine binding site. The L-lysine site is built by Val-431, Asp-432, and Ser-437. 2 residues coordinate S-adenosyl-L-methionine: Ser-452 and Arg-453.

Belongs to the aspartokinase family. In terms of assembly, homodimer.

It localises to the plastid. It is found in the chloroplast. The enzyme catalyses L-aspartate + ATP = 4-phospho-L-aspartate + ADP. It participates in amino-acid biosynthesis; L-lysine biosynthesis via DAP pathway; (S)-tetrahydrodipicolinate from L-aspartate: step 1/4. The protein operates within amino-acid biosynthesis; L-methionine biosynthesis via de novo pathway; L-homoserine from L-aspartate: step 1/3. Its pathway is amino-acid biosynthesis; L-threonine biosynthesis; L-threonine from L-aspartate: step 1/5. Inhibited by S-adenosyl-L-methionine (SAM) and lysine in a synergistic manner. No inhibition by threonine, leucine or SAM alone, and no activation or inhibition by alanine, cysteine, isoleucine, serine, valine, methionine, glutamine, asparagine, glutamic acid or arginine. In terms of biological role, involved in the first step of essential amino acids lysine, threonine, methionine and isoleucine synthesis via the aspartate-family pathway. The protein is Aspartokinase 1, chloroplastic (AK1) of Arabidopsis thaliana (Mouse-ear cress).